Consider the following 84-residue polypeptide: Sec-independent protein translocase protein TatA (84 aa).

A helical transmembrane segment spans residues 4 to 24 (MSPVHWLILAVVLLVVFGGGG). The interval 46-84 (DDESMTATDATQAPGHISPPNQNPGYSQTTSSETHRNQV) is disordered. Residues 64 to 77 (PPNQNPGYSQTTSS) are compositionally biased toward polar residues.

It belongs to the TatA/E family. As to quaternary structure, the Tat system comprises two distinct complexes: a TatABC complex, containing multiple copies of TatA, TatB and TatC subunits, and a separate TatA complex, containing only TatA subunits. Substrates initially bind to the TatABC complex, which probably triggers association of the separate TatA complex to form the active translocon.

The protein resides in the cell inner membrane. Functionally, part of the twin-arginine translocation (Tat) system that transports large folded proteins containing a characteristic twin-arginine motif in their signal peptide across membranes. TatA could form the protein-conducting channel of the Tat system. The protein is Sec-independent protein translocase protein TatA of Gluconobacter oxydans (strain 621H) (Gluconobacter suboxydans).